The following is a 481-amino-acid chain: MEDPSEPDRLASADGGSPEEEEDGEREPLLPRIAWAHPRRGAPGSAVRLLDAAGEEGEAGDEELPLPPGDVGVSRSSSAELDRSRPAVSVTIGTSEMNAFLDDPEFADIMLRAEQAIEVGIFPERISQGSSGSYFVKDPKRKIIGVFKPKSEEPYGQLNPKWTKYVHKVCCPCCFGRGCLIPNQGYLSEAGAYLVDNKLHLSIVPKTKVVWLVSETFNYNAIDRAKSRGKKYALEKVPKVGRKFHRIGLPPKIGSFQLFVEGYKEAEYWLRKFEADPLPENIRKQFQSQFERLVILDYIIRNTDRGNDNWLVRYEKQKCEKEIDHKESKWIDDEEFLIKIAAIDNGLAFPFKHPDEWRAYPFHWAWLPQAKVPFSEEIRNLILPYISDMNFVQDLCEDLYELFKTDKGFDKATFESQMSVMRGQILNLTQALRDGKSPFQLVQIPCVIVERSQGGSQGRIVHLSNSFTQTVNCRKPFFSSW.

Residues 1-11 (MEDPSEPDRLA) show a composition bias toward basic and acidic residues. A disordered region spans residues 1 to 82 (MEDPSEPDRL…VSRSSSAELD (82 aa)). 3 positions are modified to phosphoserine: Ser12, Ser17, and Ser45. A compositionally biased stretch (acidic residues) spans 53–64 (AGEEGEAGDEEL). Residues 120–451 (GIFPERISQG…VQIPCVIVER (332 aa)) form the PI3K/PI4K catalytic domain. A G-loop region spans residues 126-132 (ISQGSSG). Positions 133 and 148 each coordinate ATP. The important for substrate binding stretch occupies residues 153-155 (EPY). An important for interaction with membranes region spans residues 161-174 (KWTKYVHKVCCPCC). ATP contacts are provided by residues 257–260 (QLFV) and 271–272 (RK). The tract at residues 264–272 (KEAEYWLRK) is important for interaction with membranes. A catalytic loop region spans residues 301-309 (RNTDRGNDN). The activation loop stretch occupies residues 342–362 (AIDNGLAFPFKHPDEWRAYPF). Asp344 provides a ligand contact to ATP. Positions 357–366 (WRAYPFHWAW) are important for interaction with membranes.

The protein belongs to the PI3/PI4-kinase family. Type II PI4K subfamily. In terms of tissue distribution, widely expressed.

Its subcellular location is the cytoplasm. It is found in the cytosol. It localises to the golgi apparatus membrane. The protein resides in the endoplasmic reticulum membrane. The protein localises to the cell membrane. Its subcellular location is the early endosome membrane. The catalysed reaction is a 1,2-diacyl-sn-glycero-3-phospho-(1D-myo-inositol) + ATP = a 1,2-diacyl-sn-glycero-3-phospho-(1D-myo-inositol 4-phosphate) + ADP + H(+). Its activity is regulated as follows. Inhibited by phenylarsine oxide and adenosine. Activation through membrane association is stimulated by active RAC1. Together with PI4K2A and the type III PI4Ks (PIK4CA and PIK4CB) it contributes to the overall PI4-kinase activity of the cell. This contribution may be especially significant in plasma membrane, endosomal and Golgi compartments. The phosphorylation of phosphatidylinositol (PI) to PI4P is the first committed step in the generation of phosphatidylinositol 4,5-bisphosphate (PIP2), a precursor of the second messenger inositol 1,4,5-trisphosphate (InsP3). Contributes to the production of InsP3 in stimulated cells and is likely to be involved in the regulation of vesicular trafficking. The polypeptide is Phosphatidylinositol 4-kinase type 2-beta (PI4K2B) (Homo sapiens (Human)).